The following is a 401-amino-acid chain: Argininosuccinate synthase (401 aa).

Residues 9-17 (AFSGGLDTS) and alanine 35 contribute to the ATP site. L-citrulline-binding residues include tyrosine 88 and serine 93. Residue glycine 117 participates in ATP binding. The L-aspartate site is built by threonine 119, asparagine 123, and aspartate 124. Position 123 (asparagine 123) interacts with L-citrulline. 2 residues coordinate L-citrulline: arginine 127 and tyrosine 273.

Belongs to the argininosuccinate synthase family. Type 1 subfamily. Homotetramer.

The protein localises to the cytoplasm. It carries out the reaction L-citrulline + L-aspartate + ATP = 2-(N(omega)-L-arginino)succinate + AMP + diphosphate + H(+). It functions in the pathway amino-acid biosynthesis; L-arginine biosynthesis; L-arginine from L-ornithine and carbamoyl phosphate: step 2/3. The chain is Argininosuccinate synthase from Xylella fastidiosa (strain Temecula1 / ATCC 700964).